Consider the following 38-residue polypeptide: MSGINPNKQPVELNRTSLFWGLLLIFVLAVLFSSYFFN.

A helical transmembrane segment spans residues 17 to 37; sequence SLFWGLLLIFVLAVLFSSYFF.

This sequence belongs to the PsbL family. PSII is composed of 1 copy each of membrane proteins PsbA, PsbB, PsbC, PsbD, PsbE, PsbF, PsbH, PsbI, PsbJ, PsbK, PsbL, PsbM, PsbT, PsbY, PsbZ, Psb30/Ycf12, at least 3 peripheral proteins of the oxygen-evolving complex and a large number of cofactors. It forms dimeric complexes.

It localises to the plastid. The protein localises to the chloroplast thylakoid membrane. Its function is as follows. One of the components of the core complex of photosystem II (PSII). PSII is a light-driven water:plastoquinone oxidoreductase that uses light energy to abstract electrons from H(2)O, generating O(2) and a proton gradient subsequently used for ATP formation. It consists of a core antenna complex that captures photons, and an electron transfer chain that converts photonic excitation into a charge separation. This subunit is found at the monomer-monomer interface and is required for correct PSII assembly and/or dimerization. The polypeptide is Photosystem II reaction center protein L (Cyanidium caldarium (Red alga)).